The following is a 404-amino-acid chain: Cysteine desulfurase IscS (404 aa).

Residues 75-76, asparagine 155, glutamine 183, and 203-205 contribute to the pyridoxal 5'-phosphate site; these read AT and SAH. Lysine 206 carries the N6-(pyridoxal phosphate)lysine modification. Pyridoxal 5'-phosphate is bound at residue threonine 243. The active-site Cysteine persulfide intermediate is cysteine 328. Position 328 (cysteine 328) interacts with [2Fe-2S] cluster.

The protein belongs to the class-V pyridoxal-phosphate-dependent aminotransferase family. NifS/IscS subfamily. Homodimer. Forms a heterotetramer with IscU, interacts with other sulfur acceptors. It depends on pyridoxal 5'-phosphate as a cofactor.

It localises to the cytoplasm. It carries out the reaction (sulfur carrier)-H + L-cysteine = (sulfur carrier)-SH + L-alanine. The protein operates within cofactor biosynthesis; iron-sulfur cluster biosynthesis. Functionally, master enzyme that delivers sulfur to a number of partners involved in Fe-S cluster assembly, tRNA modification or cofactor biosynthesis. Catalyzes the removal of elemental sulfur atoms from cysteine to produce alanine. Functions as a sulfur delivery protein for Fe-S cluster synthesis onto IscU, an Fe-S scaffold assembly protein, as well as other S acceptor proteins. The protein is Cysteine desulfurase IscS of Photorhabdus laumondii subsp. laumondii (strain DSM 15139 / CIP 105565 / TT01) (Photorhabdus luminescens subsp. laumondii).